We begin with the raw amino-acid sequence, 201 residues long: Large ribosomal subunit protein bL25 (201 aa).

The disordered stretch occupies residues 181-201 (APRESEEEAEEEATETAKESE). Positions 185-194 (SEEEAEEEAT) are enriched in acidic residues.

It belongs to the bacterial ribosomal protein bL25 family. CTC subfamily. In terms of assembly, part of the 50S ribosomal subunit; part of the 5S rRNA/L5/L18/L25 subcomplex. Contacts the 5S rRNA. Binds to the 5S rRNA independently of L5 and L18.

Functionally, this is one of the proteins that binds to the 5S RNA in the ribosome where it forms part of the central protuberance. This chain is Large ribosomal subunit protein bL25, found in Thermoanaerobacter pseudethanolicus (strain ATCC 33223 / 39E) (Clostridium thermohydrosulfuricum).